The primary structure comprises 311 residues: MAGPLWRAAAFIQRHRTSLLVGSCAGLFGVQISFHLFPDPIVQWLYQYWPQGQPAPLSPHLWSLFQEVLKDIGVPSGHCYKPFTAFTFQPVSAGFPRLPAGAVVGIPAIFLGGPVTNIEHSVIIHGQRVDWQSPAGTRLRDALTMSHNAQKFALAKEVVYLESGVAALQTLPAPACLAGTWAISVGAKHALGLYGGPMSLRTAFNLVAIVVGYVAYTFSKDSLTLALEGWLDRRTASLSAAYVQGGVEFYEKILSGNLALRSLLGRQGEKLYTPSGNIVPRHWFRINHLPYTTRRDSLQQMWRATVSPGRF.

The Mitochondrial matrix segment spans residues Met-1–Thr-17. A helical membrane pass occupies residues Ser-18 to Pro-38. The Mitochondrial intermembrane segment spans residues Asp-39–Gly-164. Residues Val-165–Val-185 traverse the membrane as a helical segment. The Mitochondrial matrix segment spans residues Gly-186–Ala-190. Residues Leu-191–Val-211 traverse the membrane as a helical segment. Topologically, residues Gly-212–Phe-311 are mitochondrial intermembrane.

This sequence belongs to the TMEM177 family. Found in a complex with COX20, COA6, MT-CO2/COX2, COX18, SCO1 and SCO2. Interacts with COX20. Interacts with COX1, MT-CO2/COX2, SCO1 and SCO2 in a COX20-dependent manner.

Its subcellular location is the mitochondrion inner membrane. Its function is as follows. Plays a role in the early steps of cytochrome c oxidase subunit II (MT-CO2/COX2) maturation and is required for the stabilization of COX20 and the newly synthesized MT-CO2/COX2 protein. The sequence is that of Transmembrane protein 177 (Tmem177) from Mus musculus (Mouse).